Consider the following 134-residue polypeptide: MNDEQRYKQGLEVRTEVLGEKHVNRSLENLNDFNQDFQNFISRFAWGEVWSRPGLPRHTRSLVTIAVLLALGREDELRMHLRACFNNGVTKDELKELILHCSLYAGLPASNAAMHMAEEVFKDLGIAPEKVNKD.

This sequence belongs to the carboxymuconolactone decarboxylase family.

The enzyme catalyses (R)-2-(carboxymethyl)-5-oxo-2,5-dihydro-2-furoate + H(+) = (4,5-dihydro-5-oxofuran-2-yl)-acetate + CO2. It functions in the pathway aromatic compound metabolism; beta-ketoadipate pathway; 5-oxo-4,5-dihydro-2-furylacetate from 3-carboxy-cis,cis-muconate: step 2/2. The chain is 4-carboxymuconolactone decarboxylase (pcaC) from Acinetobacter baylyi (strain ATCC 33305 / BD413 / ADP1).